Reading from the N-terminus, the 438-residue chain is 3-phosphoshikimate 1-carboxyvinyltransferase (438 aa).

Residues Lys-20, Ser-21, and Arg-25 each coordinate 3-phosphoshikimate. Lys-20 is a binding site for phosphoenolpyruvate. Residues Gly-90 and Arg-118 each coordinate phosphoenolpyruvate. 3-phosphoshikimate-binding residues include Ser-163, Ser-164, Gln-165, Ser-191, Asp-320, and Lys-347. Gln-165 contributes to the phosphoenolpyruvate binding site. Asp-320 functions as the Proton acceptor in the catalytic mechanism. Phosphoenolpyruvate contacts are provided by Arg-351 and Arg-392.

The protein belongs to the EPSP synthase family. Monomer.

The protein resides in the cytoplasm. It catalyses the reaction 3-phosphoshikimate + phosphoenolpyruvate = 5-O-(1-carboxyvinyl)-3-phosphoshikimate + phosphate. It participates in metabolic intermediate biosynthesis; chorismate biosynthesis. Catalyzes the transfer of the enolpyruvyl moiety of phosphoenolpyruvate (PEP) to the 5-hydroxyl of shikimate-3-phosphate (S3P) to produce enolpyruvyl shikimate-3-phosphate and inorganic phosphate. The protein is 3-phosphoshikimate 1-carboxyvinyltransferase of Natronomonas pharaonis (strain ATCC 35678 / DSM 2160 / CIP 103997 / JCM 8858 / NBRC 14720 / NCIMB 2260 / Gabara) (Halobacterium pharaonis).